Consider the following 542-residue polypeptide: CTP synthase (542 aa).

The segment at 1–265 (MARYIFITGG…DQEVLSAFGI (265 aa)) is amidoligase domain. A CTP-binding site is contributed by Ser-13. Ser-13 serves as a coordination point for UTP. Residue 14 to 19 (SLGKGL) coordinates ATP. L-glutamine is bound at residue Tyr-54. Asp-71 contacts ATP. Positions 71 and 139 each coordinate Mg(2+). CTP is bound by residues 146–148 (DIE), 186–191 (KTKPTQ), and Lys-222. UTP-binding positions include 186–191 (KTKPTQ) and Lys-222. Position 238-240 (238-240 (RDV)) interacts with ATP. Residues 291–541 (TIAIVGKYTG…IAAAMEQSRL (251 aa)) enclose the Glutamine amidotransferase type-1 domain. Gly-353 contacts L-glutamine. The active-site Nucleophile; for glutamine hydrolysis is the Cys-380. L-glutamine is bound by residues 381–384 (FGMQ), Glu-404, and Arg-469. Residues His-514 and Glu-516 contribute to the active site.

It belongs to the CTP synthase family. As to quaternary structure, homotetramer.

It catalyses the reaction UTP + L-glutamine + ATP + H2O = CTP + L-glutamate + ADP + phosphate + 2 H(+). The catalysed reaction is L-glutamine + H2O = L-glutamate + NH4(+). It carries out the reaction UTP + NH4(+) + ATP = CTP + ADP + phosphate + 2 H(+). Its pathway is pyrimidine metabolism; CTP biosynthesis via de novo pathway; CTP from UDP: step 2/2. With respect to regulation, allosterically activated by GTP, when glutamine is the substrate; GTP has no effect on the reaction when ammonia is the substrate. The allosteric effector GTP functions by stabilizing the protein conformation that binds the tetrahedral intermediate(s) formed during glutamine hydrolysis. Inhibited by the product CTP, via allosteric rather than competitive inhibition. In terms of biological role, catalyzes the ATP-dependent amination of UTP to CTP with either L-glutamine or ammonia as the source of nitrogen. Regulates intracellular CTP levels through interactions with the four ribonucleotide triphosphates. The protein is CTP synthase of Beijerinckia indica subsp. indica (strain ATCC 9039 / DSM 1715 / NCIMB 8712).